We begin with the raw amino-acid sequence, 72 residues long: N-alpha-acetyltransferase 38, NatC auxiliary subunit (72 aa).

The 70-residue stretch at 3–72 (NGEILLTSWL…KHIKSFSVRA (70 aa)) folds into the Sm domain.

As to quaternary structure, component of the N-terminal acetyltransferase C (NatC) complex, composed of the catalytic subunit Naa30, a large auxiliary subunit Naa35 and a small auxiliary subunit Naa38.

The protein resides in the endoplasmic reticulum. Functionally, component of the NatC N-terminal acetyltransferase, which associates with the ribosome to acetylate nascent protein chains in a cotranslational manner. NatC acetylates protein N-termini starting with methionine, followed by a hydrophobic or amphipathic amino acid, with amino acids at positions 3 and 4 also contributing to NatC recognition. The first 4 amino acids of cognate substrates are recognized at the Naa30-Naa35 interface. NatC-dependent acetylation targets various substrate proteins to specific subcellular sites. The polypeptide is N-alpha-acetyltransferase 38, NatC auxiliary subunit (naa38) (Schizosaccharomyces pombe (strain 972 / ATCC 24843) (Fission yeast)).